A 445-amino-acid chain; its full sequence is MSTMTDVGVPETSRPSNAKPWYKVLYIQVLIAIVLGVLVGWLSPHLATNPWIKALGDGFVKLIKMVIAPIIFCTVVSGIAHIQDARKVGRVGIKALVYFEVVSSFALILGLVVGNLLPVGHGLAAKPDAGAVAKYVDQASHMHAVDFFLNIIPESVVGAFAKGDILQVLLFAILFGFALMALGERGHRLRDVIDDTAHAVFGVIAIVMKAAPVGAFGAMAFTIGKYGPAALGNLIGLVALFYATAALFVFVVLGVIAKFVGFNIFKFLGYIKDELLIVLGTSSSESALPQLMEKLERLGCSKSVVGLVVPTGYSFNLDGTNIYMTLATLFIAQALGIELSFSEQVTILLVAMLTSKGASGVTGAGFVTLAGTLAAVNPALVPGMAIVFSIDKFMSEVRALTNITGNGVATVFVSWWEGELDHDRLHANLDKTIDPSDVETAVTTG.

The next 8 membrane-spanning stretches (helical) occupy residues 24-44, 62-82, 105-125, 163-183, 201-221, 237-257, 322-342, and 370-390; these read VLYIQVLIAIVLGVLVGWLSP, LIKMVIAPIIFCTVVSGIAHI, FALILGLVVGNLLPVGHGLAA, GDILQVLLFAILFGFALMALG, FGVIAIVMKAAPVGAFGAMAF, LVALFYATAALFVFVVLGVIA, IYMTLATLFIAQALGIELSFS, and AGTLAAVNPALVPGMAIVFSI.

This sequence belongs to the dicarboxylate/amino acid:cation symporter (DAACS) (TC 2.A.23) family.

It is found in the cell inner membrane. Functionally, responsible for the transport of dicarboxylates such as succinate, fumarate, and malate from the periplasm across the membrane. The protein is C4-dicarboxylate transport protein of Rhodopseudomonas palustris (strain HaA2).